Here is a 631-residue protein sequence, read N- to C-terminus: MLLSELSHPNQLHGLTVSQLEEIACQIRERHLQVVSTSGGHLGPGLGVVELTLALYQTLDLDFDKVVWDVGHQAYPHKLVTGRFNEFDSLRQQKGIAGYLKRSESIFDHFGAGHASTSISAALGMAIARDAKGENHKCVAVIGDGALTGGMALEAINHAGTLPETPFLVILNDNDMSISPPVGALSTYLNKVRLSPPLQFLSNSVQESVKNIPLIGKDLPEELKTIKGSVRRLAVPKVGAVFEELGFTYMGPIQGHDISNLINTFNAAHRLKKPVLVHVVTTKGKGYPYAEADQVGYHAQSSFNLTTGKSIPSSKPKPVSYSKIFGQTLLKICEQDSKVIGITAAMATGTGLDLLQKNIPEQYIDVGIAEQHAVTLAAGMSCDGLKPVVAIYSTFLQRAFDQLIHDVGIQNLPVSFVLDRAGIVGADGPTHQGQYDISYMRSIPNFVLMAPKDEAELQRMLITSINHKGPTALRIPRGSGRGVAVMDEGWEPLNIGEGEILEDGEDILIVAYGSMVSSAIETSKLLKDKNISPCVINARFVRPLDKDLILPLANKIKKVVTMEEGTLIGGFGSAIVELLNDNDINIPVFRIGIPDVLVDHASPDQSKTQLGLMPNQMSENIINRFNLIKNF.

Thiamine diphosphate contacts are provided by residues His-72 and 113–115 (GHA). Asp-144 provides a ligand contact to Mg(2+). Thiamine diphosphate-binding positions include 145–146 (GA), Asn-174, Tyr-287, and Glu-370. Asn-174 provides a ligand contact to Mg(2+).

It belongs to the transketolase family. DXPS subfamily. Homodimer. It depends on Mg(2+) as a cofactor. The cofactor is thiamine diphosphate.

The enzyme catalyses D-glyceraldehyde 3-phosphate + pyruvate + H(+) = 1-deoxy-D-xylulose 5-phosphate + CO2. The protein operates within metabolic intermediate biosynthesis; 1-deoxy-D-xylulose 5-phosphate biosynthesis; 1-deoxy-D-xylulose 5-phosphate from D-glyceraldehyde 3-phosphate and pyruvate: step 1/1. Catalyzes the acyloin condensation reaction between C atoms 2 and 3 of pyruvate and glyceraldehyde 3-phosphate to yield 1-deoxy-D-xylulose-5-phosphate (DXP). This chain is 1-deoxy-D-xylulose-5-phosphate synthase, found in Prochlorococcus marinus (strain MIT 9515).